Reading from the N-terminus, the 824-residue chain is Probable acyl-CoA dehydrogenase IBR3 (824 aa).

The residue at position 2 (Gly-2) is an N-acetylglycine. FAD is bound by residues 555 to 565 (FAMTEPQVASS), 589 to 591 (WTS), Arg-706, Gln-776, and 776 to 780 (QVHGA). Residues 822 to 824 (SKL) carry the Microbody targeting signal motif.

This sequence belongs to the acyl-CoA dehydrogenase family. The cofactor is FAD.

The protein localises to the peroxisome. The catalysed reaction is a 2,3-saturated acyl-CoA + A = a 2,3-dehydroacyl-CoA + AH2. Its function is as follows. Involved with IBR1 and IBR10 in the peroxisomal beta-oxidation of indole-3-butyric acid (IBA) to form indole-3-acetic acid (IAA), a biologically active auxin. May be responsible for catalyzing the first step in IBA-CoA beta-oxidation. May play a role in defense response to pathogenic bacteria. This chain is Probable acyl-CoA dehydrogenase IBR3, found in Arabidopsis thaliana (Mouse-ear cress).